The chain runs to 859 residues: Outer membrane usher protein AfaC (859 aa).

The N-terminal stretch at 1–28 is a signal peptide; it reads MRDTSSGRMRTGVTGLALAVMVACVMFR.

It belongs to the fimbrial export usher family.

It is found in the cell outer membrane. Involved in the export and assembly of AFA-III afimbrial adhesin subunits across the outer membrane. This chain is Outer membrane usher protein AfaC (afaC), found in Escherichia coli.